The chain runs to 359 residues: Membrane-bound lytic murein transglycosylase C (359 aa).

The signal sequence occupies residues 1 to 16; it reads MKKYLALALIAPLLIS. Cys-17 carries the N-palmitoyl cysteine lipid modification. A lipid anchor (S-diacylglycerol cysteine) is attached at Cys-17.

Belongs to the transglycosylase Slt family.

It localises to the cell outer membrane. The enzyme catalyses Exolytic cleavage of the (1-&gt;4)-beta-glycosidic linkage between N-acetylmuramic acid (MurNAc) and N-acetylglucosamine (GlcNAc) residues in peptidoglycan, from either the reducing or the non-reducing ends of the peptidoglycan chains, with concomitant formation of a 1,6-anhydrobond in the MurNAc residue.. Murein-degrading enzyme. May play a role in recycling of muropeptides during cell elongation and/or cell division. This chain is Membrane-bound lytic murein transglycosylase C, found in Escherichia coli (strain SE11).